The following is a 1116-amino-acid chain: uncharacterized protein (1116 aa).

4 consecutive EF-hand domains span residues 8 to 43, 42 to 77, 166 to 201, and 292 to 327; these read EEQT…SGLA, LAPQ…VALA, LSTE…INLL, and LPED…IKLK. EH domains follow at residues 9 to 106, 134 to 224, and 259 to 348; these read EQTA…DSSK, EMTR…AAST, and DLTS…VAPL. Positions 305, 307, 309, 311, and 316 each coordinate Ca(2+). 7 disordered regions span residues 360–454, 703–774, 812–890, 909–978, 1004–1024, 1044–1066, and 1095–1116; these read PSVV…NSPT, SVNL…ASTV, TSLS…NTSA, PFAT…SPQI, TTTH…ENQY, SNEV…DDEL, and QAAE…AGHH. Positions 371-381 are enriched in pro residues; that stretch reads NPNPTLAPNPT. Over residues 401 to 416 the composition is skewed to polar residues; that stretch reads FSPTLAPQHTSSNATK. Positions 565–707 form a coiled coil; the sequence is KAQTEQVNRE…EDGLKSVNLT (143 aa). A compositionally biased stretch (polar residues) spans 723-749; it reads SFTSNGITTDKPTLPDTTSSVPTQHNS. Low complexity-rich tracts occupy residues 755–774 and 812–827; these read NTLR…ASTV and TSLS…SLDS. A compositionally biased stretch (polar residues) spans 864 to 890; it reads SKLTGSARNTAEPVENTSAEPIENTSA. Residues 957-969 show a composition bias toward acidic residues; that stretch reads EIDDDESSSDEEP. Acidic residues-rich tracts occupy residues 1055–1066 and 1104–1116; these read TANESDNDDDEL and NSST…AGHH.

It localises to the cytoplasm. It is found in the cytoskeleton. This is an uncharacterized protein from Schizosaccharomyces pombe (strain 972 / ATCC 24843) (Fission yeast).